The following is a 667-amino-acid chain: MSELLLELFSEEIPAFMQKNAEKGYLNVFTKIFEENKIFAKVKVFVGPRRITLHATHLPKVTLPKDTAIKGPSLNASEAAINGFCKAHNVSKLELFTKLINNQLYYFFIKKTEEREIKEILPEIIIEAINKYSWTKSMFWGDYNIKWVRPLRNILCIFDGEILPMQFGHLTANNITYGHRLTDNKKIEVENFEDYKNKLSENHVILERTKREEIIKAGLLELANSHDLTIKEDNRLIEEVSGLTEFPVVLLGRIPLKFLELPKEVLISSMRRHQKYFCLFDKAGNFAPYFLFVSNGRFVNAELVIKGNEKVLAARLADALYFYKQDIAKTLESNLSKLLAVTFHVKLGNLREKVDRITNICNYIAPNNKDLIMAAKLCKSDLVSEMVGEFPDLQGIMGYYYAKHDGLDEEVATAIKDHYKPQGLSDNVPNGNAALLATADKIDSLVGLMIAGEAPTGSGDPYALRRQALGIIRIIIENKLELNLNDLINFSINLYKDSSDKNKDLIISFLKERIKFYFKNNYDISLINAVLDLSAEDLVSVSLKLNTLQKFLAEDAGKQLLNAYKRASNIIGDQKITGLVDGNLFTTQSEKELFAVMQKILPQIIDSITDKDYERVLNLLSSLLAPITSFFGNVLVNDPDPKIVQNRLSLLQNTCELFHKIAKFNRL.

The protein belongs to the class-II aminoacyl-tRNA synthetase family. As to quaternary structure, tetramer of two alpha and two beta subunits.

Its subcellular location is the cytoplasm. It catalyses the reaction tRNA(Gly) + glycine + ATP = glycyl-tRNA(Gly) + AMP + diphosphate. This is Glycine--tRNA ligase beta subunit from Rickettsia canadensis (strain McKiel).